A 260-amino-acid polypeptide reads, in one-letter code: Adenosylcobinamide-GDP ribazoletransferase (260 aa).

Helical transmembrane passes span 31–51 (FYFLPLIGGLIAGLVLIPIYF), 57–77 (IEISGFISLLLYLFLTGSIHL), 108–128 (YGTIGLNVFLLLRYINYSTII), 131–151 (AGLLILAGIISRLSGLAVVVF), 173–193 (FFFWLVLVCFLSLFTPEIAAF), 206–226 (LKYLLLPLTAFILTFIIIRIS), and 240–260 (LIVELTELAVLSTSFFINVHL).

Belongs to the CobS family. Mg(2+) is required as a cofactor.

The protein resides in the cell inner membrane. The enzyme catalyses alpha-ribazole + adenosylcob(III)inamide-GDP = adenosylcob(III)alamin + GMP + H(+). It carries out the reaction alpha-ribazole 5'-phosphate + adenosylcob(III)inamide-GDP = adenosylcob(III)alamin 5'-phosphate + GMP + H(+). It functions in the pathway cofactor biosynthesis; adenosylcobalamin biosynthesis; adenosylcobalamin from cob(II)yrinate a,c-diamide: step 7/7. In terms of biological role, joins adenosylcobinamide-GDP and alpha-ribazole to generate adenosylcobalamin (Ado-cobalamin). Also synthesizes adenosylcobalamin 5'-phosphate from adenosylcobinamide-GDP and alpha-ribazole 5'-phosphate. This Treponema denticola (strain ATCC 35405 / DSM 14222 / CIP 103919 / JCM 8153 / KCTC 15104) protein is Adenosylcobinamide-GDP ribazoletransferase.